We begin with the raw amino-acid sequence, 120 residues long: Small ribosomal subunit protein uS17 (120 aa).

Low complexity predominate over residues 1–22 (MMAEAKTGAKATKSAAAGAADG). The disordered stretch occupies residues 1–46 (MMAEAKTGAKATKSAAAGAADGASKEKGPKHTPSPPKPSGRRKTRI).

Belongs to the universal ribosomal protein uS17 family. In terms of assembly, part of the 30S ribosomal subunit.

One of the primary rRNA binding proteins, it binds specifically to the 5'-end of 16S ribosomal RNA. This chain is Small ribosomal subunit protein uS17, found in Mycobacterium ulcerans (strain Agy99).